The following is a 175-amino-acid chain: Adenine phosphoribosyltransferase (175 aa).

The protein belongs to the purine/pyrimidine phosphoribosyltransferase family. In terms of assembly, homodimer.

The protein resides in the cytoplasm. The enzyme catalyses AMP + diphosphate = 5-phospho-alpha-D-ribose 1-diphosphate + adenine. It participates in purine metabolism; AMP biosynthesis via salvage pathway; AMP from adenine: step 1/1. Its function is as follows. Catalyzes a salvage reaction resulting in the formation of AMP, that is energically less costly than de novo synthesis. This is Adenine phosphoribosyltransferase from Francisella tularensis subsp. holarctica (strain FTNF002-00 / FTA).